Consider the following 398-residue polypeptide: Cysteine protease ATG4A (398 aa).

Cys-77 functions as the Nucleophile in the catalytic mechanism. Residues Asp-279 and His-281 contribute to the active site. The short motif at 393–396 (FEIL) is the LIR element.

This sequence belongs to the peptidase C54 family. Interacts with ATG9A; the interaction is direct.

The protein localises to the cytoplasm. It catalyses the reaction [protein]-C-terminal L-amino acid-glycyl-phosphatidylethanolamide + H2O = [protein]-C-terminal L-amino acid-glycine + a 1,2-diacyl-sn-glycero-3-phosphoethanolamine. With respect to regulation, inhibited by N-ethylmaleimide. Redox-regulated during autophagy since reducing conditions activate ATG4A whereas an oxidizing environment such as the presence of H(2)O(2) inhibits its activity. Its function is as follows. Cysteine protease that plays a key role in autophagy by mediating both proteolytic activation and delipidation of ATG8 family proteins. The protease activity is required for proteolytic activation of ATG8 family proteins: cleaves the C-terminal amino acid of ATG8 proteins to reveal a C-terminal glycine. Exposure of the glycine at the C-terminus is essential for ATG8 proteins conjugation to phosphatidylethanolamine (PE) and insertion to membranes, which is necessary for autophagy. Preferred substrate is GABARAPL2 followed by MAP1LC3A and GABARAP. Protease activity is also required to counteract formation of high-molecular weight conjugates of ATG8 proteins (ATG8ylation): acts as a deubiquitinating-like enzyme that removes ATG8 conjugated to other proteins, such as ATG3. In addition to the protease activity, also mediates delipidation of ATG8 family proteins. Catalyzes delipidation of PE-conjugated forms of ATG8 proteins during macroautophagy. Compared to ATG4B, the major protein for proteolytic activation of ATG8 proteins, shows weaker ability to cleave the C-terminal amino acid of ATG8 proteins, while it displays stronger delipidation activity. Involved in phagophore growth during mitophagy independently of its protease activity and of ATG8 proteins: acts by regulating ATG9A trafficking to mitochondria and promoting phagophore-endoplasmic reticulum contacts during the lipid transfer phase of mitophagy. The sequence is that of Cysteine protease ATG4A from Homo sapiens (Human).